Here is a 172-residue protein sequence, read N- to C-terminus: NADH-ubiquinone oxidoreductase chain 6 (172 aa).

5 helical membrane passes run 1-21 (MAFY…AIAS), 24-44 (APYF…GILV), 53-73 (LILF…SAAL), 86-106 (VVFW…GFLL), and 140-160 (GKML…VLEV).

The protein belongs to the complex I subunit 6 family. In terms of assembly, core subunit of respiratory chain NADH dehydrogenase (Complex I) which is composed of 45 different subunits.

Its subcellular location is the mitochondrion inner membrane. The enzyme catalyses a ubiquinone + NADH + 5 H(+)(in) = a ubiquinol + NAD(+) + 4 H(+)(out). Its function is as follows. Core subunit of the mitochondrial membrane respiratory chain NADH dehydrogenase (Complex I) which catalyzes electron transfer from NADH through the respiratory chain, using ubiquinone as an electron acceptor. Essential for the catalytic activity and assembly of complex I. The sequence is that of NADH-ubiquinone oxidoreductase chain 6 (mt-nd6) from Danio rerio (Zebrafish).